Here is a 234-residue protein sequence, read N- to C-terminus: MQHWLDKLTDLTAIEGDGCILKTGLADVADHFGFTGYAYLHIQHKHIIAVTNYHHDWRSLYFDKKFDALDPVVKRARSRKQVFAWSGEQERPKLSEEERAFYAQAADFGIRSGITIPIRTANGSMSMFTLASERTAIPLDREIDAVAAAAAVGQLHARISFLRITPTAEDAAWLDPKEATYLRWIAVGKTMEEIADVEEVKYNSVRVKLREAMKRFDVRSKAHLTALAIKRKLI.

The region spanning 167–232 is the HTH luxR-type domain; that stretch reads TAEDAAWLDP…HLTALAIKRK (66 aa). Positions 191–210 form a DNA-binding region, H-T-H motif; the sequence is MEEIADVEEVKYNSVRVKLR.

Belongs to the autoinducer-regulated transcriptional regulatory protein family.

Functionally, positive regulation of conjugal transfer of Ti plasmids. This Agrobacterium vitis (Rhizobium vitis) protein is Transcriptional activator protein TraR (traR).